A 211-amino-acid polypeptide reads, in one-letter code: Type II secretion system protein J (211 aa).

The propeptide at 1–7 is leader sequence; that stretch reads MRPRAAG. Phe8 is modified (N-methylphenylalanine). The helical transmembrane segment at 8–28 threads the bilayer; sequence FTLIEVLLATMLLVGGLALAF.

This sequence belongs to the GSP J family.

The protein localises to the membrane. Its function is as follows. Involved in a type II secretion system (T2SS, formerly general secretion pathway, GSP) for the export of proteins. The polypeptide is Type II secretion system protein J (xpsJ) (Xanthomonas campestris pv. campestris (strain ATCC 33913 / DSM 3586 / NCPPB 528 / LMG 568 / P 25)).